Here is a 105-residue protein sequence, read N- to C-terminus: Nucleoid-associated protein Ccur92_18190 (105 aa).

It belongs to the YbaB/EbfC family. Homodimer.

The protein localises to the cytoplasm. The protein resides in the nucleoid. Binds to DNA and alters its conformation. May be involved in regulation of gene expression, nucleoid organization and DNA protection. The polypeptide is Nucleoid-associated protein Ccur92_18190 (Campylobacter curvus (strain 525.92)).